Here is a 159-residue protein sequence, read N- to C-terminus: Ribosomal RNA large subunit methyltransferase H (159 aa).

S-adenosyl-L-methionine-binding positions include Gly-108 and Phe-127–Phe-132.

The protein belongs to the RNA methyltransferase RlmH family. In terms of assembly, homodimer.

Its subcellular location is the cytoplasm. The catalysed reaction is pseudouridine(1915) in 23S rRNA + S-adenosyl-L-methionine = N(3)-methylpseudouridine(1915) in 23S rRNA + S-adenosyl-L-homocysteine + H(+). Its function is as follows. Specifically methylates the pseudouridine at position 1915 (m3Psi1915) in 23S rRNA. The chain is Ribosomal RNA large subunit methyltransferase H from Clostridium beijerinckii (strain ATCC 51743 / NCIMB 8052) (Clostridium acetobutylicum).